The chain runs to 460 residues: MSVRFSSASRRLGSCGGAGSVRLSSGGAGFGVGSTGSVPGFGSGFTCAFGGSSSAGSYSGGLGGGSASCTAFTGNEHGLLSGNEKVTMQNLNDRLASYLDNVRALEEANADLEQKIKGWYEKFGPGSCRGLDHDYSRYFTVIDDLRNQIISATTSNANIVLQNDNARLTADDFRLKFENEQALHQSVDADVSSLRRVLDELTLCRTDLEIQLETLSEELAYLKKNHEEEMKALQCAAGGNVNVEMNAAPGVDLTVLLNNMRAEYEALAEQNRRDAEAWFNEKSASLQQQISDDAGATTSARNELTEMKRTLQTLEIELQSLLATKHSLECSLTETEGNYCAQLAQIQAQIGALEEQLHQVRTETEGQKLEYEQLLDIKVHLEKEIETYCRLIDGEDGSCTKSKGYGGPGNQIKDPSKATVVKTIVEEIDPRGKVPSSRVHTVEEKSTKVNNMKSEQRVPS.

Residues 1 to 83 (MSVRFSSASR…GNEHGLLSGN (83 aa)) are head. Positions 84–119 (EKVTMQNLNDRLASYLDNVRALEEANADLEQKIKGW) are coil 1A. The IF rod domain occupies 84 to 399 (EKVTMQNLND…RLIDGEDGSC (316 aa)). The tract at residues 120–141 (YEKFGPGSCRGLDHDYSRYFTV) is linker 1. The coil 1B stretch occupies residues 142–233 (IDDLRNQIIS…KNHEEEMKAL (92 aa)). Positions 234 to 256 (QCAAGGNVNVEMNAAPGVDLTVL) are linker 12. Residues 257–395 (LNNMRAEYEA…ETYCRLIDGE (139 aa)) are coil 2. A tail region spans residues 396-460 (DGSCTKSKGY…NMKSEQRVPS (65 aa)). Residues 429–460 (DPRGKVPSSRVHTVEEKSTKVNNMKSEQRVPS) are disordered. Positions 448 to 460 (KVNNMKSEQRVPS) are enriched in polar residues.

The protein belongs to the intermediate filament family. In terms of assembly, heterotetramer of two type I and two type II keratins. Interacts with KRT6A to form filaments.

Its subcellular location is the cytoplasm. Essential for the proper assembly of type I and type II keratin protein complexes and formation of keratin intermediate filaments in the inner root sheath (irs). The protein is Keratin, type I cytoskeletal 27 of Capra hircus (Goat).